A 33-amino-acid chain; its full sequence is Protamine TP16 (33 aa).

Residues 1–33 are disordered; the sequence is MPRRRRSSSRPVRRRRRARVSRRRRRRGRRRRR.

Testis.

The protein resides in the nucleus. It is found in the chromosome. Its function is as follows. Protamines substitute for histones in the chromatin of sperm during the haploid phase of spermatogenesis. They compact sperm DNA into a highly condensed, stable and inactive complex. The sequence is that of Protamine TP16 from Oncorhynchus mykiss (Rainbow trout).